A 1088-amino-acid polypeptide reads, in one-letter code: MHSKDMDFVQMFVCFLLCWTGVDAVFNLKYTVEEELRAGTKIANVTADAKVAGFALGNRQPYLRVISNSEPRWVNLSPAGLLITKQKIDRDAVCRQTPKCFISLEVMSNSMEICVIKIEIIDVNDNAPRFPTNHIDIEISENAAPGTRFPLEGASDPDSGSNGIQTYTITPNDIFGLEIKTRGDGSKIAELVVEKTLDRETQSRYTFELTAEDGGDPPKSGTVQLNIKVIDSNDNNPVFDEPVYTVNVLENSPINTLVIDLNATDPDEGTNGEVVYSFINFVSNLTKQMFKIDPKTGVITVNGVLDHEELHIHEIDVQAKDLGPNSIPAHCKVIVNVIDINDNAPEIKLLSENSEMVEVSENAPLGYVIALVRVSDNDSGANGKVQCRLQGNVPFRLNEFESFSTLLVDGRLDREQRDMYNLTILAEDSGYPPLRSSKSFAVKVTDENDNPPYFTKPHYQAMVLENNVPGAFLLAVSARDPDLGMNGTVSYEIIKSEVRGMSVESYVTVNSNGEIYGVRAFNHEDTRTFEFKVSAKDGGDPPLTSNATVRIVVLDVNDNTPVMTTPPLVNGTAEVSIPKNAGVGYLVTQIKADDYDEGENGRLTYSISEGDMAYFEIDQINGEVRTTKTFGENAKPSYQITVVAHDHGQTSLSASAYIVIYLSPDLNAQEQIGPVNLSLIFIIALGSIAVILFVTMIFVAVKCKRDNKEIRTYNCRVAEYSYGNQKKSSKKKKLSKNDIRLVPRDVEETDKMNVVSCSSLTSSLNYFDYHQQTLPLGCRRSESTFLNVENQNSRNAAPNHGYHHTFTGQGPQQPDLIINGMPLPETENYSIDSSYVNSRAHLIKSTSTFKDMEGNSLKDSGHEESDQTDSEHDVQRGHYADTAVNDVLNMTVPSNNSQIPDQDQSEGFHCQDECRILGHSDRCWMPRVPIPARAKSPEHGRNVIALSIEATTVDVPHYEDCGTTKRTFATFGKDGPDEDRAEQRGRRQTAEPAVCSPKTNGAVREAGNGREAVSPITSPVHLKSPQSKASSTYNTLKCRDAERIANHSLLRQPEGKDSEPAMREINTLLQDGRDKESPGSKRLKDIVL.

An N-terminal signal peptide occupies residues 1–24; that stretch reads MHSKDMDFVQMFVCFLLCWTGVDA. At 25 to 678 the chain is on the extracellular side; sequence VFNLKYTVEE…QEQIGPVNLS (654 aa). Cadherin domains lie at 31–130, 131–239, 240–347, 351–454, 455–563, and 569–676; these read TVEE…APRF, PTNH…NPVF, DEPV…APEI, SENS…PPYF, TKPH…TPVM, and VNGT…GPVN. Ca(2+)-binding residues include E34 and E35. N44 is a glycosylation site (N-linked (GlcNAc...) asparagine). Residues D89 and D91 each contribute to the Ca(2+) site. C94 and C100 are joined by a disulfide. D122, V123, N124, D125, N126, E141, D156, D158, N162, E200, D213, D231, S232, N233, D234, N235, and E250 together coordinate Ca(2+). N262 carries an N-linked (GlcNAc...) asparagine glycan. The Ca(2+) site is built by D265, D267, and N271. N284 is a glycosylation site (N-linked (GlcNAc...) asparagine). Residues D306, E308, D339, I340, N341, D342, N343, E361, and D376 each coordinate Ca(2+). An N-linked (GlcNAc...) asparagine glycan is attached at N377. The Ca(2+) site is built by D378, N382, D413, and E415. N421 carries an N-linked (GlcNAc...) asparagine glycan. 13 residues coordinate Ca(2+): D428, D446, E447, N448, D449, N450, E465, D480, D482, N486, N522, E524, and D537. N-linked (GlcNAc...) asparagine glycosylation occurs at N486. N546 carries an N-linked (GlcNAc...) asparagine glycan. Positions 555, 556, 557, 558, and 559 each coordinate Ca(2+). An N-linked (GlcNAc...) asparagine glycan is attached at N570. Residues D594, D596, N600, and D646 each coordinate Ca(2+). A glycan (N-linked (GlcNAc...) asparagine) is linked at N676. The helical transmembrane segment at 679–699 threads the bilayer; that stretch reads LIFIIALGSIAVILFVTMIFV. Residues 700-1088 lie on the Cytoplasmic side of the membrane; it reads AVKCKRDNKE…GSKRLKDIVL (389 aa). 4 disordered regions span residues 792–813, 851–875, 970–1032, and 1067–1088; these read NSRNAAPNHGYHHTFTGQGPQQ, DMEGNSLKDSGHEESDQTDSEHDVQ, TFGK…ASST, and TLLQDGRDKESPGSKRLKDIVL. A compositionally biased stretch (basic and acidic residues) spans 859 to 875; sequence DSGHEESDQTDSEHDVQ. The segment covering 1071 to 1088 has biased composition (basic and acidic residues); that stretch reads DGRDKESPGSKRLKDIVL.

In terms of assembly, homodimer; antiparallel. Interacts with cadherin cdh2; the interaction confers robust cell adhesion activity on pcdh19. As to expression, in the embryo, strongly expressed in the developing nervous system. At 12 hours post fertilization (hpf), shows a segmental expression pattern in the anterior third of the neural keel with strong expression in the presumptive forebrain, cerebellum/rhombomere 1 and rhombomere 4. By 24 hpf, expressed widely in the brain and spinal cord with higher expression levels in the ventral telencephalon, dorsal and central thalamus, optic tectum, central tegmentum, cerebellum and dorsolateral regions of the hindbrain. As development proceeds, expression becomes restricted to the dorsal and/or lateral regions of the central nervous system. Not detected in the spinal cord of two- and three-day old embryos. Expressed in the eye primordium, developing retina, lens and otic vesicle. Expressed in the larval optic tectum at 4 days post-fertilization where it localizes in discrete columns of neurons. Expressed throughout the adult brain with strong expression in the ventromedial telencephalon, periventricular regions of the thalamus and anterior hypothalamus, stratum periventriculare of the optic tectum, dorsal tegmental nucleus, granular regions of the cerebellar body and valvula, and superficial layers of the facial and vagal lobes.

The protein localises to the cell membrane. In terms of biological role, calcium-dependent cell-adhesion protein. Essential for the early stages of neurulation in the anterior neural plate. Shows little cell adhesion activity on its own but exhibits robust homophilic cell adhesion when in a complex with cadherin cdh2 and appears to mediate the adhesion while cdh2 acts as a cell adhesion cofactor in the complex. Functions with cdh2 to coordinate cell adhesion and cell movements during neurulation. Contributes to neural progenitor cell patterning with cdh2 by promoting homophilic cell interactions. Regulates the columnar organization of neurons in the optic tectum. This Danio rerio (Zebrafish) protein is Protocadherin-19.